A 360-amino-acid polypeptide reads, in one-letter code: Phospho-N-acetylmuramoyl-pentapeptide-transferase (360 aa).

The next 10 helical transmembrane spans lie at 21 to 41, 71 to 91, 94 to 114, 142 to 162, 168 to 188, 199 to 219, 236 to 256, 263 to 283, 288 to 308, and 338 to 358; these read YLTFRAIMSILTGLGFALWIG, TPTMGGIMILLSIFLSVILWA, SNPYVWVVLFVLVSFGTIGFI, LVVAFFLYATATTDAQTVLVV, IMPQLGLLFILMTYFVIVGAS, GLAIMPTVMVAAGFALIAWAT, ASELMVICTAIIGAGLGFLWF, VFMGDVGSLALGAILGIIAVL, FLLFIMGGVFVMETMSVILQV, and VIVRFWIITLVLVLLGLVTLK.

This sequence belongs to the glycosyltransferase 4 family. MraY subfamily. It depends on Mg(2+) as a cofactor.

Its subcellular location is the cell inner membrane. It carries out the reaction UDP-N-acetyl-alpha-D-muramoyl-L-alanyl-gamma-D-glutamyl-meso-2,6-diaminopimeloyl-D-alanyl-D-alanine + di-trans,octa-cis-undecaprenyl phosphate = di-trans,octa-cis-undecaprenyl diphospho-N-acetyl-alpha-D-muramoyl-L-alanyl-D-glutamyl-meso-2,6-diaminopimeloyl-D-alanyl-D-alanine + UMP. It participates in cell wall biogenesis; peptidoglycan biosynthesis. Functionally, catalyzes the initial step of the lipid cycle reactions in the biosynthesis of the cell wall peptidoglycan: transfers peptidoglycan precursor phospho-MurNAc-pentapeptide from UDP-MurNAc-pentapeptide onto the lipid carrier undecaprenyl phosphate, yielding undecaprenyl-pyrophosphoryl-MurNAc-pentapeptide, known as lipid I. In Tolumonas auensis (strain DSM 9187 / NBRC 110442 / TA 4), this protein is Phospho-N-acetylmuramoyl-pentapeptide-transferase.